The chain runs to 325 residues: Small ribosomal subunit protein RACK1 (325 aa).

WD repeat units follow at residues 5 to 48 (QMKL…WDVD), 58 to 99 (IGRP…WDLN), 100 to 141 (QGVS…WNTL), 143 to 186 (QCKY…WNLG), 187 to 227 (NCRL…LWDL), 228 to 268 (NEGK…WDLE), and 269 to 320 (DKKE…YQVS).

It belongs to the WD repeat G protein beta family. Ribosomal protein RACK1 subfamily.

Required for the expression of antimicrobial peptide nlp-29 in response to fungal infection or physical injury. This is Small ribosomal subunit protein RACK1 (rack-1) from Caenorhabditis elegans.